The chain runs to 235 residues: Hydroxyacylglutathione hydrolase (235 aa).

Histidine 53, histidine 55, aspartate 57, histidine 58, histidine 109, aspartate 127, and histidine 165 together coordinate Zn(2+).

It belongs to the metallo-beta-lactamase superfamily. Glyoxalase II family. In terms of assembly, monomer. Zn(2+) is required as a cofactor.

The catalysed reaction is an S-(2-hydroxyacyl)glutathione + H2O = a 2-hydroxy carboxylate + glutathione + H(+). The protein operates within secondary metabolite metabolism; methylglyoxal degradation; (R)-lactate from methylglyoxal: step 2/2. In terms of biological role, thiolesterase that catalyzes the hydrolysis of S-D-lactoyl-glutathione to form glutathione and D-lactic acid. This is Hydroxyacylglutathione hydrolase from Actinobacillus pleuropneumoniae serotype 7 (strain AP76).